Reading from the N-terminus, the 995-residue chain is Bifunctional glutamine synthetase adenylyltransferase/adenylyl-removing enzyme (995 aa).

An adenylyl removase region spans residues 1–487; sequence MNVTKPATQR…LHAKLFYQPL (487 aa). Positions 492–995 are adenylyl transferase; it reads APAGLEIAGR…KAVVRKVFGS (504 aa).

It belongs to the GlnE family. Requires Mg(2+) as cofactor.

It carries out the reaction [glutamine synthetase]-O(4)-(5'-adenylyl)-L-tyrosine + phosphate = [glutamine synthetase]-L-tyrosine + ADP. The catalysed reaction is [glutamine synthetase]-L-tyrosine + ATP = [glutamine synthetase]-O(4)-(5'-adenylyl)-L-tyrosine + diphosphate. Its function is as follows. Involved in the regulation of glutamine synthetase GlnA, a key enzyme in the process to assimilate ammonia. When cellular nitrogen levels are high, the C-terminal adenylyl transferase (AT) inactivates GlnA by covalent transfer of an adenylyl group from ATP to specific tyrosine residue of GlnA, thus reducing its activity. Conversely, when nitrogen levels are low, the N-terminal adenylyl removase (AR) activates GlnA by removing the adenylyl group by phosphorolysis, increasing its activity. The regulatory region of GlnE binds the signal transduction protein PII (GlnB) which indicates the nitrogen status of the cell. This Mycobacterium marinum (strain ATCC BAA-535 / M) protein is Bifunctional glutamine synthetase adenylyltransferase/adenylyl-removing enzyme.